We begin with the raw amino-acid sequence, 478 residues long: UDP-N-acetylmuramate--L-alanine ligase (478 aa).

ATP is bound at residue 122–128; it reads GTHGKTT.

This sequence belongs to the MurCDEF family.

It localises to the cytoplasm. The enzyme catalyses UDP-N-acetyl-alpha-D-muramate + L-alanine + ATP = UDP-N-acetyl-alpha-D-muramoyl-L-alanine + ADP + phosphate + H(+). The protein operates within cell wall biogenesis; peptidoglycan biosynthesis. In terms of biological role, cell wall formation. In Stenotrophomonas maltophilia (strain R551-3), this protein is UDP-N-acetylmuramate--L-alanine ligase.